We begin with the raw amino-acid sequence, 629 residues long: MVLSCRVVDCGGLKLKENQTLLLLVSTIHNSSEVGKLSIDAEEKRSKEWLEMPCAEGMLSLKLTLWQDLLKGINSVFHGQVRVDVDENWKSGPAKWFYLRSKANEDGEGGEDGGDIGDATVKVTYQIDHILRMQVYKPLLDLLFLAGDVQPLTASLVAVIEALPKVELGPVSRSLVELMAQSDRIRPVLSSLYVNSILKCQDENTLFRGQSLSGKMLFEILTTYGKMYLITTLKPVVDKIYKERKNCEVDPARVAVGASLEKNRNNLLVYFQMLFERVTTSSTNCPHLIKQLLYDLRNVVGTHSSRSGVQRLAVSSFVIMRFFAAAILNPKAFEIRKDQPDLRVSRTLLLLSKLLQRLSNCSVSEGPLSSKEIWLNGVFETVTSEQHKSVMASFLDNISLVGDRSEPQKCTVFKFGNLQQVDRSRLAWKKVLHYKKRYVQLTNTHLIWQKDVQCAPKGTVPLSDIKFVNVDNKNIITIVCETMQLQFEAPGGVEATDWLNAIERQRNRAAHEIAETPGEHFFVDAERHVDKIHTLLYKYRETMIEWRDQLQSNVELDEKTAPELLKASYVVEEERQSHKDSLIATLCSTIDVTDAIQLAHTEYEKENKVSRRIDAIITAKKRQKSFSVK.

Positions 183–398 (DRIRPVLSSL…SVMASFLDNI (216 aa)) constitute a Ras-GAP domain. In terms of domain architecture, PH spans 411–507 (TVFKFGNLQQ…WLNAIERQRN (97 aa)).

It localises to the cytoplasm. In terms of biological role, GTPase-activating protein, which inhibits the vulval induction by acting as a negative regulator for the member of the Ras family let-60. Probably decreases the signaling activity of Ras by stimulating its intrinsic GTPase activity, thereby lowering the levels of GTP-bound, active Ras. In Caenorhabditis elegans, this protein is Ras GTPase-activating protein gap-1 (gap-1).